The chain runs to 95 residues: Scytovirin (95 aa).

Residues 3-41 (GPTYCWNEANNPGGPNRCSNNKQCDGARTCSSSGFCQGT) form an SD1 region. Cystine bridges form between cysteine 7/cysteine 55, cysteine 20/cysteine 32, cysteine 26/cysteine 38, cysteine 68/cysteine 80, and cysteine 74/cysteine 86. Residues 51 to 89 (GPTYCWDEAKNPGGPNRCSNSKQCDGARTCSSSGFCQGT) are SD2.

Its function is as follows. Has strong anti-HIV activity against T-tropic strains of HIV-1 and weaker activity against M-tropic strains of HIV-1. Inhibits HIV-1 fusion and infection of CD4 LTR beta-gal cells in vitro. Inhibits fusion of HIV infected CEM-SS cells with uninfected CEM-SS cells, and fusion of HIV-1 Env expressing HL2/3 cells with CD4 LTR beta-gal cells. Binds to HIV gp120, HIV gp160 and to a lesser extent HIV gp41. Binding to HIV gp120 is glycosylation dependent. Binds with high specificity to the tetrasaccharide Man-alpha-1,2-Man-alpha-1,6-Man-alpha-1,6-Man and also binds the higher-order oligosaccharides oligomannose 8 and oligomannose 9. Does not bind to monosaccharides, complex or hybrid N-linked oligosaccharides or chitin. This chain is Scytovirin, found in Scytonema varium.